The chain runs to 154 residues: Cold shock domain-containing protein C2 (154 aa).

2 disordered regions span residues 1–22 (MTSESTSPPVVPPLHSPKSPVW) and 36–62 (ERGGGVSPRDLPSPLPTKRTRTYSATA). The residue at position 19 (serine 19) is a Phosphoserine. Residues 69-136 (VFKGVCKQFS…KFQAVEVVLT (68 aa)) form the CSD domain.

In terms of tissue distribution, brain-specific. Expression restricted to the pyramidal neurons of the cerebral cortex and in the Purkinje cells of the cerebellum.

It is found in the nucleus. The protein localises to the cytoplasm. Functionally, RNA-binding factor which binds specifically to the very 3'-UTR ends of both histone H1 and H3.3 mRNAs, encompassing the polyadenylation signal. Might play a central role in the negative regulation of histone variant synthesis in the developing brain. This chain is Cold shock domain-containing protein C2 (Csdc2), found in Rattus norvegicus (Rat).